The primary structure comprises 142 residues: Cell division protein SepF (142 aa).

The protein belongs to the SepF family. As to quaternary structure, homodimer. Interacts with FtsZ.

Its subcellular location is the cytoplasm. Cell division protein that is part of the divisome complex and is recruited early to the Z-ring. Probably stimulates Z-ring formation, perhaps through the cross-linking of FtsZ protofilaments. Its function overlaps with FtsA. In Geobacillus kaustophilus (strain HTA426), this protein is Cell division protein SepF.